The primary structure comprises 103 residues: Cell division protein FtsB (103 aa).

Topologically, residues M1 to K3 are cytoplasmic. The helical transmembrane segment at L4–F21 threads the bilayer. Topologically, residues G22 to R103 are periplasmic. A coiled-coil region spans residues N33–G62.

Belongs to the FtsB family. Part of a complex composed of FtsB, FtsL and FtsQ.

Its subcellular location is the cell inner membrane. Essential cell division protein. May link together the upstream cell division proteins, which are predominantly cytoplasmic, with the downstream cell division proteins, which are predominantly periplasmic. This chain is Cell division protein FtsB, found in Salmonella agona (strain SL483).